The sequence spans 399 residues: Type II secretion system protein L (399 aa).

The Cytoplasmic portion of the chain corresponds to 1-247 (MSKAENTSGK…VKPWKQALLP (247 aa)). Residues 248-264 (WRNVLIALSAWLLLVLG) traverse the membrane as a helical segment. The Periplasmic segment spans residues 265–399 (ESVWTHYQWY…EGQLTLRSQP (135 aa)).

It belongs to the GSP L family. As to quaternary structure, type II secretion system is composed of four main components: the outer membrane complex, the inner membrane complex, the cytoplasmic secretion ATPase and the periplasm-spanning pseudopilus. Forms homodimers. Interacts with OutM/GspM. Interacts with OutE/GspE and OutF/GspF.

The protein localises to the cell inner membrane. In terms of biological role, inner membrane component of the type II secretion system required for the energy-dependent secretion of extracellular factors such as proteases and toxins from the periplasm. Plays a role in the complex assembly and recruits OutM resulting in a stable complex in the inner membrane. Provides thus a link between the energy-providing OutE protein in the cytoplasm and the rest of the T2SS machinery. This is Type II secretion system protein L (outL) from Dickeya chrysanthemi (Pectobacterium chrysanthemi).